Consider the following 261-residue polypeptide: Taurine import ATP-binding protein TauB (261 aa).

Residues 4 to 233 (LQLERIGAQY…RYAAGESARA (230 aa)) form the ABC transporter domain. 38–45 (GPSGSGKT) provides a ligand contact to ATP.

It belongs to the ABC transporter superfamily. Taurine importer (TC 3.A.1.17.1) family. The complex is composed of two ATP-binding proteins (TauB), two transmembrane proteins (TauC) and a solute-binding protein (TauA).

It localises to the cell inner membrane. The enzyme catalyses taurine(out) + ATP + H2O = taurine(in) + ADP + phosphate + H(+). In terms of biological role, part of the ABC transporter complex TauABC involved in taurine import. Responsible for energy coupling to the transport system. This Pseudomonas savastanoi pv. phaseolicola (strain 1448A / Race 6) (Pseudomonas syringae pv. phaseolicola (strain 1448A / Race 6)) protein is Taurine import ATP-binding protein TauB.